We begin with the raw amino-acid sequence, 124 residues long: Small ribosomal subunit protein uS12 (124 aa).

The residue at position 90 (D90) is a 3-methylthioaspartic acid.

It belongs to the universal ribosomal protein uS12 family. Part of the 30S ribosomal subunit. Contacts proteins S8 and S17. May interact with IF1 in the 30S initiation complex.

Functionally, with S4 and S5 plays an important role in translational accuracy. Its function is as follows. Interacts with and stabilizes bases of the 16S rRNA that are involved in tRNA selection in the A site and with the mRNA backbone. Located at the interface of the 30S and 50S subunits, it traverses the body of the 30S subunit contacting proteins on the other side and probably holding the rRNA structure together. The combined cluster of proteins S8, S12 and S17 appears to hold together the shoulder and platform of the 30S subunit. This Wolbachia pipientis subsp. Culex pipiens (strain wPip) protein is Small ribosomal subunit protein uS12.